The following is a 55-amino-acid chain: Neurotoxin BmP08 (55 aa).

Residues 1–23 (MKIFFAVLVILVLFSMLIWTAYG) form the signal peptide. 3 cysteine pairs are disulfide-bonded: Cys30/Cys45, Cys36/Cys50, and Cys39/Cys53.

As to expression, expressed by the venom gland.

It localises to the secreted. This is Neurotoxin BmP08 from Olivierus martensii (Manchurian scorpion).